A 386-amino-acid chain; its full sequence is Succinate--CoA ligase [ADP-forming] subunit beta (386 aa).

Residues 9–244 enclose the ATP-grasp domain; the sequence is KEVLRKYGVA…LDEEDPKEIE (236 aa). ATP contacts are provided by residues K46, 53-55, E99, C102, and E107; that span reads GRG. Mg(2+) contacts are provided by N199 and D213. Residues N264 and 321–323 each bind substrate; that span reads GIM.

It belongs to the succinate/malate CoA ligase beta subunit family. Heterotetramer of two alpha and two beta subunits. The cofactor is Mg(2+).

It carries out the reaction succinate + ATP + CoA = succinyl-CoA + ADP + phosphate. It catalyses the reaction GTP + succinate + CoA = succinyl-CoA + GDP + phosphate. It participates in carbohydrate metabolism; tricarboxylic acid cycle; succinate from succinyl-CoA (ligase route): step 1/1. In terms of biological role, succinyl-CoA synthetase functions in the citric acid cycle (TCA), coupling the hydrolysis of succinyl-CoA to the synthesis of either ATP or GTP and thus represents the only step of substrate-level phosphorylation in the TCA. The beta subunit provides nucleotide specificity of the enzyme and binds the substrate succinate, while the binding sites for coenzyme A and phosphate are found in the alpha subunit. The protein is Succinate--CoA ligase [ADP-forming] subunit beta of Bacillus licheniformis (strain ATCC 14580 / DSM 13 / JCM 2505 / CCUG 7422 / NBRC 12200 / NCIMB 9375 / NCTC 10341 / NRRL NRS-1264 / Gibson 46).